A 128-amino-acid chain; its full sequence is DNA-directed RNA polymerase subunit omega (128 aa).

The tract at residues Ala-87–Phe-106 is disordered.

This sequence belongs to the RNA polymerase subunit omega family. In terms of assembly, the RNAP catalytic core consists of 2 alpha, 1 beta, 1 beta' and 1 omega subunit. When a sigma factor is associated with the core the holoenzyme is formed, which can initiate transcription.

The catalysed reaction is RNA(n) + a ribonucleoside 5'-triphosphate = RNA(n+1) + diphosphate. Functionally, promotes RNA polymerase assembly. Latches the N- and C-terminal regions of the beta' subunit thereby facilitating its interaction with the beta and alpha subunits. This Anaplasma marginale (strain St. Maries) protein is DNA-directed RNA polymerase subunit omega.